The primary structure comprises 182 residues: Doublesex- and mab-3-related transcription factor C1 (182 aa).

At Thr-15 the chain carries Phosphoserine. Residues 26–39 (AQVDTATQEESSQG) show a composition bias toward polar residues. 2 disordered regions span residues 26-48 (AQVD…QHPE) and 136-174 (QTRH…PSGH).

The protein belongs to the DMRT family. In terms of tissue distribution, expressed in Sertoli cells in male testis.

This chain is Doublesex- and mab-3-related transcription factor C1 (Dmrtc1), found in Mus musculus (Mouse).